The chain runs to 66 residues: Putative inactive (E)-beta-ocimene synthase, chloroplastic (66 aa).

The N-terminal 25 residues, 1-25 (MAAHNLCFNSAFVCNVHHQKTQHFP), are a transit peptide targeting the chloroplast.

This sequence belongs to the terpene synthase family. Tpsb subfamily. As to expression, expressed exclusively in flowers.

It localises to the plastid. It is found in the chloroplast. The sequence is that of Putative inactive (E)-beta-ocimene synthase, chloroplastic (TPS02) from Arabidopsis thaliana (Mouse-ear cress).